A 361-amino-acid polypeptide reads, in one-letter code: Beta-hexosaminidase (361 aa).

Substrate contacts are provided by residues D69, R77, R144, and 174 to 175 (KH). The Proton donor/acceptor role is filled by H187. The active-site Nucleophile is D258.

This sequence belongs to the glycosyl hydrolase 3 family. NagZ subfamily.

The protein resides in the cytoplasm. The catalysed reaction is Hydrolysis of terminal non-reducing N-acetyl-D-hexosamine residues in N-acetyl-beta-D-hexosaminides.. The protein operates within cell wall biogenesis; peptidoglycan recycling. Functionally, plays a role in peptidoglycan recycling by cleaving the terminal beta-1,4-linked N-acetylglucosamine (GlcNAc) from peptide-linked peptidoglycan fragments, giving rise to free GlcNAc, anhydro-N-acetylmuramic acid and anhydro-N-acetylmuramic acid-linked peptides. This Neisseria meningitidis serogroup B (strain ATCC BAA-335 / MC58) protein is Beta-hexosaminidase.